The primary structure comprises 119 residues: Hemerythrin subunit A (119 aa).

Fe cation contacts are provided by histidine 26, histidine 55, glutamate 59, histidine 74, histidine 78, histidine 107, and aspartate 112.

Belongs to the hemerythrin family.

In terms of biological role, hemerythrin is a respiratory protein in blood cells of certain marine worms. The oxygen-binding site in each chain contains two iron atoms. In Sipunculus nudus (Sipunculan worm), this protein is Hemerythrin subunit A.